Here is a 474-residue protein sequence, read N- to C-terminus: Probable cytosol aminopeptidase (474 aa).

Positions 237 and 242 each coordinate Mn(2+). Lysine 249 is a catalytic residue. Positions 260, 319, and 321 each coordinate Mn(2+). The active site involves arginine 323.

This sequence belongs to the peptidase M17 family. The cofactor is Mn(2+).

Its subcellular location is the cytoplasm. It catalyses the reaction Release of an N-terminal amino acid, Xaa-|-Yaa-, in which Xaa is preferably Leu, but may be other amino acids including Pro although not Arg or Lys, and Yaa may be Pro. Amino acid amides and methyl esters are also readily hydrolyzed, but rates on arylamides are exceedingly low.. It carries out the reaction Release of an N-terminal amino acid, preferentially leucine, but not glutamic or aspartic acids.. Its function is as follows. Presumably involved in the processing and regular turnover of intracellular proteins. Catalyzes the removal of unsubstituted N-terminal amino acids from various peptides. This is Probable cytosol aminopeptidase from Helicobacter hepaticus (strain ATCC 51449 / 3B1).